Here is a 3080-residue protein sequence, read N- to C-terminus: MIGYFFVSLIYPFSLICSSVFRSNVVSYIYFIFFLLSILCLPHKSLILKNKISKTLPIITLVLSMFSLILQLLVNVVKVFQEQDELSVNILTAFGFYKYNSFWIVFRNVLPDVIVFVISLFTIILWFKNLVYPASINIKDSLKKTTSLNNVDQILNSPYVHGGSGNFNSGSNNNNNNNNIVYRPAGRGLTGFSFLMLTLSSISYPSIINVIYFVFTILIILLLASKLSIHKVMLKCYPILLITSLCHLLFVYLNQIEYFYMKYTVFKEQKWYGVLNYTEWDVTYWPLVIGYITVLLLYISTCILFRKQQLFNRTKPRYKQKLDKLGIMSDSNNNNNNNNKSRTTKLAIIFSKHGWTICCSQILVVCFFLTASVASAILLASGLICTLLPLKVFKKVIYIILLYFLVFISAQYIFNIPFSYSETDLQSYGLFSFNNSKWLYIGVQIVVSLTLSLYCFYSDIKDDDLGTIKKDQQSQQSQPQPQQQQQQQQSSQNNQIQQSPLQYQQPLPPTPISNKSLPSSPMSTKSTTVHIQNNNNGGGGGIIRPRKPLPPVPLGMIGKSSMAMTSNSSFGSNKPLNYIQQQQLQLQQQKVIGYQTSASINQLDINDSFSIAFPSLMLLTSGIGKGYDTFRGKYGGTFSKITSSLKAIAEITFLAIIGQSYRLALVGLFFCGLTSINLLNAGYMLFFIVFVISESLASRFWMCLIIYAQMVLLTLYIWQLSWISSYENDLTVLIGMTNYYGSPLWVGLIWHIIIITFSIIQWNVNKLYQRGLFSSSSSSSSSSNNNQNNNQNNQNNSYEDKFKNIPNFLLVFGDFIYRSVQQLSLPFCYLVIVIVSIFTKISLINIVYMATVFLCLLIHHISANGSIHIKRFWIIIILSQGVVLVARYIMQFNQVSHWLNSIFPKSNYISLSDIGLRNYSSSDRFIELFGCSSILVVCVFQLTVFFSIGQQQQQQQQQQQQQQQQQQQQQQQQQQQQQQQQQQQQQQQQQLNTSNNNNQNNNNLIIKKYTFFDSLLYIVKRICYLHGPKFVLWMVFAISIAEYNFFNFIYLIMIVISMSFKKGTYRIGSFLLFYSQLWVLTQLAALLPTVQSFNSDKFFMDWVGLRQPNVSTPWDAVKLNLAIILVISIQQTSYWWNKEIQNEKLEIKKKKQLKKQQQQQRKLEEHEEEYEEEEDQFGNKKNNDKLSLLSNDSIEIILDDGNNNNNNNNNNNNNNNNNNNNNNNNNNNNNNNNNNNNNNNQSNNENNENNNNSKKENLKKRLFWYISNFYELYGLECVFLVLAFALFWRLNILGMIYLIIIAVGLNIDKRNLHKLIYVSALLAPTILIQYLLILVVPTKENSYPWLDHPFFLNHKTIDNLLLLSIPDRYVLVIDFLVLFFSMLLFKQRNGYYLYKDFELHQQQQLNQQLNQQQHDSLKSIASSNSSSQKPLHPKNFFKFNSSIDGGDDDFTKEPRSWSNELRYMIIRYSSQVILIVIFLAGTAECDILSCFYVFFSVYVLFSGNAHSRKWSYLWKSLHIYNWLVLMAQIIFQVAVILYFQFKFNSNQMFEGHNHNHNHNHSSSSSSSSSGSIIDILSSQSSAIGIGGGNSSGSDSSYEVIENSLPTELYNIAVVFGFKIETGPLSISTISDVIIMVLLAYQKMIFQSRDFHILEEHLKAKRDLNYETAREFYKIRRNARIEQLNSIQDKITQRRSRLQHLKLKRINRRKNRHNHYYNNNPNNNYNNNNNNNNSNSSNSNNNNNDDDSNEPLSLGDNSFVPPKNTTNQNATNSTYSPFANSTMHMPPYENNNNNNNNNNNFNNNPLSNSSSTVSSFGVIEKPLEKKNWVKIYLNKILDWLDPLPDILIENYKKQQLQQQQKLEMNQSLLFGDQLQQEQQQQQEQQQQLNPQQQQSQSSKELPPILEQFEHNDDDFEISLNQAPGDYRNSIFIDSEQMRNAMQQMEQRRQQRLQQSIDASQLLQQQQQQQQASSSNTNTNSNNNNYNNNNNNNNNNNNNNNNNNNNNNNNNNNNNNNNNNNNNEIPKPNQTSSSTITLEPIEDEEEFLYKEKTQYFKRIIRGFSRIARDESKWLVFMACIANGVFYNSIISLVYLLAVFLYGRLFESPRPSKNFWRFMIGYSSLIICLKYVFQIPKNYYNCNENYHNSNNGTILMTSTSVYNTNNNINNNNQLNNNENYEWWQCPNTLLSEQNLLLTLPYVFGLYIIDGHFISGAFWDLAILLCCLWHRHVYRSKGLWNFQEKDFYVDQKQQSPLNLFNLDQQHFDQQQIDQIQNQQDLNNSPISLNSSNNNNNNNNNNNNNNNNNNNNNNNNNNNNNNNNDQTLIDINNNNNNNNNNNNNNNNNNNNNNNNNNNNNNNNNNNNNNNNNNNIIIDQILVDCSNEYDEEDQQQFNEFYDEEFDDRNEQEKENDEQEIQVIKKSSKSIAKIIIYPFKWLFVSIIEYVWLAIRTDEKPGRDYYMPLLFTDFACLFFLVIFPQNFTGIPSSDIAEFLEQNVIPRQYIVILLAQFGVIILDRIIYLYKSVKAKFVLQIVLTVLYHVFLFFYFPDLIVKPFSFGYTWPLVVFYLMKCIYLYYSALQICYGYPILSQNRFLMDGYSDFHNIGYALYKAIPFVYELRTLLDWIATDTTMLFYDWLKFEDLYSTIFSVKCRLEWIKRQGRQKGHKQPKFEKFVTGVTFFIGLVILLWFPLIILSSGLPGSNIEPVNNIQIEVSVVGWNPFLKINQDLSLESGDGDSTMDQNSFNNLKEDYSFLTTDDRQGIQNISINTFSEEIWNLSPPAKAQLINYLLTNTSLQIEVSYTLTRSGGVNSVIVGSNSVQLKPDQELNFYNILTRVQSNNSNNSNNPNENSSSGSDDNNNNSNNNIGSNSFIVEGLFYKFIKLPGVSGNPIYPTDNNGNVLALDALFTMNSTNFNNSNQPPQYFWQVNAYDSTKTYNISTLESIQFYTISSKLPNGITSTLVSAGIIGLYVSVVLSVGRFLRLSITQISIKIQLENLDSCDEILKMIDDVFIAREYGDLVLEEELYHELIQVFRQPQLLYSLTTFKNNQLNLPTTPTINSTLNNQNNQNNNNNNNNNHEKIN.

6 helical membrane passes run 28-48, 57-77, 86-106, 113-133, 204-224, and 232-252; these read YIYF…SLIL, PIIT…VNVV, LSVN…WIVF, VIVF…LVYP, YPSI…LLLA, and VMLK…LFVY. A glycan (N-linked (GlcNAc...) asparagine) is linked at Asn276. Residues 285-305 form a helical membrane-spanning segment; that stretch reads WPLVIGYITVLLLYISTCILF. Residues Asn312 and Asn339 are each glycosylated (N-linked (GlcNAc...) asparagine). 2 helical membrane-spanning segments follow: residues 362 to 382 and 396 to 416; these read ILVV…LASG and VIYI…IFNI. N-linked (GlcNAc...) asparagine glycosylation occurs at Asn434. Residues 438–458 traverse the membrane as a helical segment; that stretch reads WLYIGVQIVVSLTLSLYCFYS. Positions 469 to 548 are disordered; sequence KKDQQSQQSQ…GGGIIRPRKP (80 aa). The segment covering 473-505 has biased composition (low complexity); it reads QSQQSQPQPQQQQQQQQSSQNNQIQQSPLQYQQ. The span at 512–532 shows a compositional bias: polar residues; the sequence is ISNKSLPSSPMSTKSTTVHIQ. N-linked (GlcNAc...) asparagine glycans are attached at residues Asn514, Asn567, and Asn606. Transmembrane regions (helical) follow at residues 672 to 692, 700 to 720, and 740 to 760; these read GLTS…VFVI, FWMC…IWQL, and YGSP…FSII. A glycan (N-linked (GlcNAc...) asparagine) is linked at Asn795. 3 helical membrane passes run 827–847, 849–869, and 872–892; these read FCYL…INIV, MATV…SIHI, and FWII…IMQF. Asn918 carries an N-linked (GlcNAc...) asparagine glycan. Residues 928–948 form a helical membrane-spanning segment; it reads LFGCSSILVVCVFQLTVFFSI. Asn992 carries an N-linked (GlcNAc...) asparagine glycan. 2 helical membrane passes run 1036–1056 and 1067–1087; these read FAIS…MIVI and IGSF…AALL. The N-linked (GlcNAc...) asparagine glycan is linked to Asn1109. The segment at 1158–1185 is disordered; it reads QQQRKLEEHEEEYEEEEDQFGNKKNNDK. The span at 1166–1176 shows a compositional bias: acidic residues; the sequence is HEEEYEEEEDQ. N-linked (GlcNAc...) asparagine glycans are attached at residues Asn1191, Asn1240, and Asn1251. Positions 1199 to 1253 are disordered; sequence DDGNNNNNNNNNNNNNNNNNNNNNNNNNNNNNNNNNNNNNNNQSNNENNENNNNS. A compositionally biased stretch (low complexity) spans 1202–1252; sequence NNNNNNNNNNNNNNNNNNNNNNNNNNNNNNNNNNNNNNNQSNNENNENNNN. Helical transmembrane passes span 1281–1301, 1316–1336, and 1360–1380; these read VLAF…LIII, IYVS…ILVV, and LLLL…VLFF. Asn1424 and Asn1440 each carry an N-linked (GlcNAc...) asparagine glycan. 2 consecutive transmembrane segments (helical) span residues 1472–1492 and 1519–1539; these read VILI…SCFY and IYNW…ILYF. N-linked (GlcNAc...) asparagine glycosylation is found at Asn1559 and Asn1589. Residues 1619–1639 traverse the membrane as a helical segment; the sequence is IETGPLSISTISDVIIMVLLA. Basic residues predominate over residues 1704–1714; sequence RINRRKNRHNH. Residues 1704–1812 form a disordered region; the sequence is RINRRKNRHN…NPLSNSSSTV (109 aa). Positions 1715–1742 are enriched in low complexity; the sequence is YYNNNPNNNYNNNNNNNNSNSSNSNNNN. N-linked (GlcNAc...) asparagine glycans are attached at residues Asn1731, Asn1734, Asn1763, Asn1768, Asn1771, Asn1779, Asn1807, and Asn1864. The segment covering 1762–1782 has biased composition (polar residues); it reads KNTTNQNATNSTYSPFANSTM. A compositionally biased stretch (low complexity) spans 1789–1812; that stretch reads NNNNNNNNNNNFNNNPLSNSSSTV. Disordered stretches follow at residues 1873 to 1899 and 1958 to 2032; these read LQQE…SSKE and SQLL…TSSS. Positions 1958–2021 are enriched in low complexity; the sequence is SQLLQQQQQQ…NNNNNNNNNN (64 aa). N-linked (GlcNAc...) asparagine glycosylation occurs at Asn2027. The next 2 membrane-spanning stretches (helical) occupy residues 2078–2098 and 2112–2132; these read IANG…AVFL and FWRF…VFQI. A glycan (N-linked (GlcNAc...) asparagine) is linked at Asn2148. The helical transmembrane segment at 2199–2219 threads the bilayer; it reads VFGLYIIDGHFISGAFWDLAI. The segment at 2277-2367 is disordered; that stretch reads LNNSPISLNS…NNNNNNNNNN (91 aa). Asn2285 is a glycosylation site (N-linked (GlcNAc...) asparagine). Over residues 2288-2367 the composition is skewed to low complexity; sequence NNNNNNNNNN…NNNNNNNNNN (80 aa). The next 2 helical transmembrane spans lie at 2427-2447 and 2457-2477; these read IIIY…WLAI and YYMP…IFPQ. An N-linked (GlcNAc...) asparagine glycan is attached at Asn2478. A run of 4 helical transmembrane segments spans residues 2500-2520, 2530-2550, 2553-2573, and 2671-2691; these read YIVI…IYLY, QIVL…DLIV, FSFG…IYLY, and FVTG…PLII. N-linked (GlcNAc...) asparagine glycosylation is found at Asn2762, Asn2790, Asn2837, Asn2840, Asn2848, Asn2858, Asn2908, Asn2913, and Asn2935. Residues 2835–2863 form a disordered region; it reads QSNNSNNSNNPNENSSSGSDDNNNNSNNN. The span at 2836 to 2863 shows a compositional bias: low complexity; it reads SNNSNNSNNPNENSSSGSDDNNNNSNNN. Residues 2955–2975 form a helical membrane-spanning segment; that stretch reads ITSTLVSAGIIGLYVSVVLSV. The tract at residues 3054–3080 is disordered; the sequence is PTINSTLNNQNNQNNNNNNNNNHEKIN. Residue Asn3057 is glycosylated (N-linked (GlcNAc...) asparagine). Positions 3061 to 3074 are enriched in low complexity; sequence NNQNNQNNNNNNNN.

Belongs to the PIEZO (TC 1.A.75) family.

It is found in the membrane. The protein is Protein PIEZO homolog of Dictyostelium discoideum (Social amoeba).